The sequence spans 98 residues: NADH-ubiquinone oxidoreductase chain 4L (98 aa).

3 consecutive transmembrane segments (helical) span residues M1–M21, S29–L49, and I61–V81.

This sequence belongs to the complex I subunit 4L family. In terms of assembly, core subunit of respiratory chain NADH dehydrogenase (Complex I) which is composed of 45 different subunits.

Its subcellular location is the mitochondrion inner membrane. It catalyses the reaction a ubiquinone + NADH + 5 H(+)(in) = a ubiquinol + NAD(+) + 4 H(+)(out). Core subunit of the mitochondrial membrane respiratory chain NADH dehydrogenase (Complex I) which catalyzes electron transfer from NADH through the respiratory chain, using ubiquinone as an electron acceptor. Part of the enzyme membrane arm which is embedded in the lipid bilayer and involved in proton translocation. The protein is NADH-ubiquinone oxidoreductase chain 4L (MT-ND4L) of Mesophylla macconnelli (MacConnell's bat).